A 332-amino-acid chain; its full sequence is UDP-N-acetylenolpyruvoylglucosamine reductase (332 aa).

An FAD-binding PCMH-type domain is found at 15–184 (IDVSAACFLE…TYVSFRLSKR (170 aa)). R160 is an active-site residue. S232 acts as the Proton donor in catalysis. The active site involves E328.

The protein belongs to the MurB family. FAD is required as a cofactor.

It localises to the cytoplasm. It carries out the reaction UDP-N-acetyl-alpha-D-muramate + NADP(+) = UDP-N-acetyl-3-O-(1-carboxyvinyl)-alpha-D-glucosamine + NADPH + H(+). It functions in the pathway cell wall biogenesis; peptidoglycan biosynthesis. Cell wall formation. This chain is UDP-N-acetylenolpyruvoylglucosamine reductase, found in Bacteroides fragilis (strain ATCC 25285 / DSM 2151 / CCUG 4856 / JCM 11019 / LMG 10263 / NCTC 9343 / Onslow / VPI 2553 / EN-2).